A 123-amino-acid polypeptide reads, in one-letter code: MAKPSYVKFEVPKELAEKALQAVEIARDTGKIRKGTNETTKAVERGQAKLVIIAEDVDPEEIVAHLPPLCEEKEIPYIYVPSKKELGAAAGIEVAAASVAIIEPGKARDLVEEIAMKVKELMK.

The protein belongs to the eukaryotic ribosomal protein eL8 family. May be present in up to 3 copies per 70S ribosome. Part of the 50S ribosomal subunit, where it binds 23S rRNA at its canonical site near the L1 stalk, as well as a possible second 50S binding site near helix 25 and a possible third site on the beak of the 30S subunit. Component of box C/D small ribonucleoprotein (sRNP) particles that contain rpl7ae, FlpA and nop5, plus a guide RNA. These sRNP particles form homodimers, giving rise to an asymmetric holoenzyme. Probably part of the RNase P complex.

The protein localises to the cytoplasm. In terms of biological role, multifunctional RNA-binding protein that recognizes the K-turn motif in ribosomal RNA, the RNA component of RNase P, box H/ACA, box C/D and box C'/D' sRNAs. Component of the 70S ribosome. Component of a box C/D small ribonucleoprotein (sRNP) particle that is involved in pre-rRNA and tRNA processing. Utilizes the methyl donor S-adenosyl-L-methionine to catalyze the site-specific 2'-hydroxyl methylation of ribose moieties in rRNA and tRNA. Site specificity is provided by a guide RNA that base pairs with the substrate. Methylation occurs at a characteristic distance from the sequence involved in base pairing with the guide RNA. In Pyrococcus furiosus (strain ATCC 43587 / DSM 3638 / JCM 8422 / Vc1), this protein is Large ribosomal subunit protein eL8.